A 373-amino-acid polypeptide reads, in one-letter code: 3 beta-hydroxysteroid dehydrogenase/Delta 5--&gt;4-isomerase type 3 (373 aa).

The Proton acceptor role is filled by Tyr-155. Lys-159 lines the NAD(+) pocket. The chain crosses the membrane as a helical span at residues 288-308 (VPILYWLAFLLETVSFLLSPI).

This sequence belongs to the 3-beta-HSD family. In terms of tissue distribution, liver and kidney. Greater expression in liver.

The protein localises to the endoplasmic reticulum membrane. The protein resides in the mitochondrion membrane. The catalysed reaction is a 3beta-hydroxy-Delta(5)-steroid + NAD(+) = a 3-oxo-Delta(5)-steroid + NADH + H(+). It catalyses the reaction a 3-oxo-Delta(5)-steroid = a 3-oxo-Delta(4)-steroid. It participates in lipid metabolism; steroid biosynthesis. 3-beta-HSD is a bifunctional enzyme, that catalyzes the oxidative conversion of Delta(5)-ene-3-beta-hydroxy steroid, and the oxidative conversion of ketosteroids. The 3-beta-HSD enzymatic system plays a crucial role in the biosynthesis of all classes of hormonal steroids. The sequence is that of 3 beta-hydroxysteroid dehydrogenase/Delta 5--&gt;4-isomerase type 3 (Hsd3b3) from Mus musculus (Mouse).